The sequence spans 248 residues: Phycocyanobilin:ferredoxin oxidoreductase (248 aa).

It belongs to the HY2 family.

The catalysed reaction is (2R,3Z)-phycocyanobilin + 4 oxidized [2Fe-2S]-[ferredoxin] = biliverdin IXalpha + 4 reduced [2Fe-2S]-[ferredoxin] + 4 H(+). Functionally, catalyzes the four-electron reduction of biliverdin IX-alpha (2-electron reduction at both the A and D rings); the reaction proceeds via an isolatable 2-electron intermediate, 181,182-dihydrobiliverdin. The chain is Phycocyanobilin:ferredoxin oxidoreductase from Synechococcus sp. (strain ATCC 27144 / PCC 6301 / SAUG 1402/1) (Anacystis nidulans).